We begin with the raw amino-acid sequence, 217 residues long: NADPH-dependent 3-demethoxyubiquinone 3-hydroxylase, mitochondrial (217 aa).

Repeat copies occupy residues 48–129 (AVDQ…TALL) and 130–217 (GKEG…SERF). The 2 X approximate tandem repeats stretch occupies residues 48-217 (AVDQIIRVDH…SAAIYLSERF (170 aa)). The Fe cation site is built by E60, E90, H93, E142, E178, and H181. 2 residues coordinate NADH: Y212 and R216.

This sequence belongs to the COQ7 family. Component of a multi-subunit COQ enzyme complex. Interacts with COQ8B and COQ6. Interacts with COQ9. It depends on Fe cation as a cofactor.

The protein resides in the mitochondrion inner membrane. The enzyme catalyses a 5-methoxy-2-methyl-3-(all-trans-polyprenyl)benzoquinone + NADH + O2 = a 3-demethylubiquinone + NAD(+) + H2O. It participates in cofactor biosynthesis; ubiquinone biosynthesis. Its function is as follows. Catalyzes the hydroxylation of the 5-methoxy-2-methyl-3-(all-trans-polyprenyl)benzoquinone at the C6 position and participates in the biosynthesis of ubiquinone. Catalyzes the reaction through a substrate-mediated reduction pathway, whereby NADH shuttles electrons to 5-methoxy-2-methyl-3-(all-trans-decaprenyl)benzoquinone, which then transfers the electrons to the two Fe(3+) centers. The binding of 5-methoxy-2-methyl-3-(all-trans-polyprenyl)benzoquinone (DMQn) mediates reduction of the diiron center by nicotinamide adenine dinucleotide (NADH) and initiates oxygen activation for subsequent DMQ hydroxylation. The physiological substrates are 5-methoxy-2-methyl-3-(all-trans-nonaprenyl)benzoquinone (DMQ(9)) and 5-methoxy-2-methyl-3-(all-trans-decaprenyl)benzoquinone (DMQ(10)), however in vitro the enzyme does not have any specificity concerning the length of the polyprenyl tail, and accepts tails of various lengths with similar efficiency. Also has a structural role in the COQ enzyme complex, stabilizing other COQ polypeptides. Involved in lifespan determination in a ubiquinone-independent manner. Plays a role in modulating mitochondrial stress responses, acting in the nucleus, perhaps via regulating gene expression, independent of its characterized mitochondrial function in ubiquinone biosynthesis. This Rattus norvegicus (Rat) protein is NADPH-dependent 3-demethoxyubiquinone 3-hydroxylase, mitochondrial.